Here is a 76-residue protein sequence, read N- to C-terminus: MLILGRRKGESILIGDDIEITIVDIQGDYIRMGIQAPREVSIVRKEIKEQIREENIKAAEKPEGLPALLEEMKKFI.

This sequence belongs to the CsrA/RsmA family. Homodimer; the beta-strands of each monomer intercalate to form a hydrophobic core, while the alpha-helices form wings that extend away from the core.

The protein localises to the cytoplasm. Its function is as follows. A translational regulator that binds mRNA to regulate translation initiation and/or mRNA stability. Usually binds in the 5'-UTR at or near the Shine-Dalgarno sequence preventing ribosome-binding, thus repressing translation. Its main target seems to be the major flagellin gene, while its function is anatagonized by FliW. In Syntrophomonas wolfei subsp. wolfei (strain DSM 2245B / Goettingen), this protein is Translational regulator CsrA.